A 704-amino-acid chain; its full sequence is E3 ubiquitin-protein ligase MBR1 (704 aa).

6 disordered regions span residues Met1–Val20, Asn37–His61, Ser176–Gly197, Leu245–Gln354, Ser381–Asn403, and Ser436–Arg525. Residues Phe43 to His61 show a composition bias toward polar residues. 2 stretches are compositionally biased toward low complexity: residues Ala184 to Phe196 and Leu245 to Pro255. Composition is skewed to polar residues over residues Phe281–Leu290, Arg300–Leu329, and Arg340–Gln354. Residues Gln452–Asn467 are compositionally biased toward pro residues. Positions Ser485 to Ser505 are enriched in low complexity. The RING-type; atypical zinc finger occupies Cys656–Lys697.

The protein belongs to the RING-type zinc finger family. In terms of assembly, interacts with MED25 and UBC11.

The enzyme catalyses S-ubiquitinyl-[E2 ubiquitin-conjugating enzyme]-L-cysteine + [acceptor protein]-L-lysine = [E2 ubiquitin-conjugating enzyme]-L-cysteine + N(6)-ubiquitinyl-[acceptor protein]-L-lysine.. Its pathway is protein modification; protein ubiquitination. Functionally, E3 ubiquitin-protein ligase that functions as a regulator of MED25 stability by targeting MED25 for degradation in a RING-H2-dependent way. Proteasome-dependent degradation of MED25 seems to activate its function as positive regulator of FLOWERING LOCUS T (FT) and is important to induce the expression of FT and consequently to promote flowering. The sequence is that of E3 ubiquitin-protein ligase MBR1 (MBR1) from Arabidopsis thaliana (Mouse-ear cress).